A 469-amino-acid chain; its full sequence is UDP-N-acetylmuramate--L-alanine ligase (469 aa).

G113 to T119 contacts ATP.

The protein belongs to the MurCDEF family.

Its subcellular location is the cytoplasm. It catalyses the reaction UDP-N-acetyl-alpha-D-muramate + L-alanine + ATP = UDP-N-acetyl-alpha-D-muramoyl-L-alanine + ADP + phosphate + H(+). It participates in cell wall biogenesis; peptidoglycan biosynthesis. In terms of biological role, cell wall formation. The protein is UDP-N-acetylmuramate--L-alanine ligase of Neisseria gonorrhoeae (strain ATCC 700825 / FA 1090).